The sequence spans 243 residues: 3-deoxy-manno-octulosonate cytidylyltransferase (243 aa).

This sequence belongs to the KdsB family.

It localises to the cytoplasm. The enzyme catalyses 3-deoxy-alpha-D-manno-oct-2-ulosonate + CTP = CMP-3-deoxy-beta-D-manno-octulosonate + diphosphate. Its pathway is nucleotide-sugar biosynthesis; CMP-3-deoxy-D-manno-octulosonate biosynthesis; CMP-3-deoxy-D-manno-octulosonate from 3-deoxy-D-manno-octulosonate and CTP: step 1/1. It participates in bacterial outer membrane biogenesis; lipopolysaccharide biosynthesis. Its function is as follows. Activates KDO (a required 8-carbon sugar) for incorporation into bacterial lipopolysaccharide in Gram-negative bacteria. This is 3-deoxy-manno-octulosonate cytidylyltransferase from Helicobacter pylori (strain J99 / ATCC 700824) (Campylobacter pylori J99).